The primary structure comprises 354 residues: Ferredoxin--NADP reductase 2 (354 aa).

FAD contacts are provided by threonine 14, aspartate 33, glutamine 41, tyrosine 46, alanine 86, phenylalanine 121, aspartate 289, and threonine 330.

Belongs to the ferredoxin--NADP reductase type 2 family. Homodimer. It depends on FAD as a cofactor.

The catalysed reaction is 2 reduced [2Fe-2S]-[ferredoxin] + NADP(+) + H(+) = 2 oxidized [2Fe-2S]-[ferredoxin] + NADPH. The sequence is that of Ferredoxin--NADP reductase 2 from Christiangramia forsetii (strain DSM 17595 / CGMCC 1.15422 / KT0803) (Gramella forsetii).